Here is a 522-residue protein sequence, read N- to C-terminus: Cytochrome P450 714C2 (522 aa).

Residues 1–11 (MELFSSQQWLA) lie on the Lumenal side of the membrane. A helical; Signal-anchor for type III membrane protein transmembrane segment spans residues 12 to 32 (LLPPIILCILLFSYVYIILWL). At 33–522 (RPERLRQKLR…KGVPLIFREL (490 aa)) the chain is on the cytoplasmic side. Cysteine 470 is a heme binding site.

The protein belongs to the cytochrome P450 family. Heme serves as cofactor.

The protein localises to the membrane. Probably not involved in gibberellin metabolism since over-expression of CYP714C2 in a heterologous system does not induce semi-dwarfism. This is Cytochrome P450 714C2 (CYP714C2) from Oryza sativa subsp. japonica (Rice).